Reading from the N-terminus, the 692-residue chain is Protein arginine N-methyltransferase 7 (692 aa).

2 consecutive SAM-dependent MTase PRMT-type domains span residues 14 to 345 (SLEW…YCVW) and 358 to 684 (SAYQ…ITME). The residue at position 32 (R32) is an Omega-N-methylarginine. Catalysis depends on residues E144 and E153.

It belongs to the class I-like SAM-binding methyltransferase superfamily. Protein arginine N-methyltransferase family. PRMT7 subfamily. Homodimer and heterodimer. Interacts with PRMT5 and SNRPD3. Interacts with CTCFL.

The protein localises to the cytoplasm. It is found in the cytosol. The protein resides in the nucleus. The catalysed reaction is L-arginyl-[protein] + S-adenosyl-L-methionine = N(omega)-methyl-L-arginyl-[protein] + S-adenosyl-L-homocysteine + H(+). In terms of biological role, arginine methyltransferase that can both catalyze the formation of omega-N monomethylarginine (MMA) and symmetrical dimethylarginine (sDMA), with a preference for the formation of MMA. Specifically mediates the symmetrical dimethylation of arginine residues in the small nuclear ribonucleoproteins Sm D1 (SNRPD1) and Sm D3 (SNRPD3); such methylation being required for the assembly and biogenesis of snRNP core particles. Specifically mediates the symmetric dimethylation of histone H4 'Arg-3' to form H4R3me2s. Plays a role in gene imprinting by being recruited by CTCFL at the H19 imprinted control region (ICR) and methylating histone H4 to form H4R3me2s, possibly leading to recruit DNA methyltransferases at these sites. May also play a role in embryonic stem cell (ESC) pluripotency. Also able to mediate the arginine methylation of histone H2A and myelin basic protein (MBP) in vitro; the relevance of such results is however unclear in vivo. The protein is Protein arginine N-methyltransferase 7 (Prmt7) of Mus musculus (Mouse).